The primary structure comprises 819 residues: Probable phosphoenolpyruvate synthase (819 aa).

Histidine 441 serves as the catalytic Tele-phosphohistidine intermediate. Substrate is bound by residues arginine 540, arginine 587, glutamate 684, glycine 706, threonine 707, asparagine 708, and aspartate 709. Glutamate 684 contributes to the Mg(2+) binding site. A Mg(2+)-binding site is contributed by aspartate 709. Cysteine 756 (proton donor) is an active-site residue.

The protein belongs to the PEP-utilizing enzyme family. Mg(2+) serves as cofactor.

The enzyme catalyses pyruvate + ATP + H2O = phosphoenolpyruvate + AMP + phosphate + 2 H(+). It functions in the pathway carbohydrate biosynthesis; gluconeogenesis. In terms of biological role, catalyzes the phosphorylation of pyruvate to phosphoenolpyruvate. The protein is Probable phosphoenolpyruvate synthase (ppsA) of Pyrococcus abyssi (strain GE5 / Orsay).